Reading from the N-terminus, the 218-residue chain is Eukaryotic translation initiation factor 3 subunit K (218 aa).

Positions 44–205 (YDWGANLAVL…NIKTKNITEK (162 aa)) constitute a PCI domain.

It belongs to the eIF-3 subunit K family. Component of the eukaryotic translation initiation factor 3 (eIF-3) complex.

The protein localises to the cytoplasm. Functionally, component of the eukaryotic translation initiation factor 3 (eIF-3) complex, which is involved in protein synthesis of a specialized repertoire of mRNAs and, together with other initiation factors, stimulates binding of mRNA and methionyl-tRNAi to the 40S ribosome. The eIF-3 complex specifically targets and initiates translation of a subset of mRNAs involved in cell proliferation. The polypeptide is Eukaryotic translation initiation factor 3 subunit K (Bombyx mori (Silk moth)).